Consider the following 566-residue polypeptide: Putative ankyrin repeat protein RF_0987 (566 aa).

Disordered stretches follow at residues 61 to 118 (KKKN…HENS), 276 to 314 (PPVM…SAEI), and 355 to 392 (VNNN…SEST). Residues 78 to 92 (NQEEPKLASQEHTEA) show a composition bias toward basic and acidic residues. Residues 101-112 (TGNTALPSVTAS) are compositionally biased toward polar residues. The segment covering 296–308 (TPVTTPSKVVPTT) has biased composition (low complexity). Residues 365–378 (EKSPPVSSSNVTIQ) show a composition bias toward polar residues. ANK repeat units lie at residues 506 to 535 (SGET…KIST) and 539 to 566 (ECQY…KGYQ).

This chain is Putative ankyrin repeat protein RF_0987, found in Rickettsia felis (strain ATCC VR-1525 / URRWXCal2) (Rickettsia azadi).